The following is a 300-amino-acid chain: MNLILELLLLVGIIIYSYLESLVKFFIPQRRKSVAGQTVLITGAGHGIGRLTAYEFAKQKSRLVLWDISKHGVEETAAKCRKLGAVVHVFVVDCSNRAEIYKSVDQVKKEVGDIEIVVNNAGAIYPADLLSTKDEEITKTFEVNILGHFWIIKALLPSMLRRNSGHIVTVASVCGHRVIPYLIPYCSSKFAAVGFHRALTAELDTLGKTGIKTSCLCPVFVNTGFTKNPSTRLWPVLEPDEVARSLIDGILTNKKMIFVPSYINISLIVEMFFPERVLKAINRIQNIQFEAIVGHRTKRK.

The signal sequence occupies residues 1–19 (MNLILELLLLVGIIIYSYL). Ser-33 carries the post-translational modification Phosphoserine. 40-67 (LITGAGHGIGRLTAYEFAKQKSRLVLWD) contributes to the NAD(+) binding site. Ser-69 bears the Phosphoserine mark. Lys-79 is modified (N6-acetyllysine). Ser-172 provides a ligand contact to substrate. Tyr-185 functions as the Proton acceptor in the catalytic mechanism. NAD(+) is bound at residue Lys-189.

The protein belongs to the short-chain dehydrogenases/reductases (SDR) family.

The protein localises to the lipid droplet. The protein resides in the endoplasmic reticulum. It catalyses the reaction 17beta-estradiol + NAD(+) = estrone + NADH + H(+). The catalysed reaction is all-trans-retinol + NAD(+) = all-trans-retinal + NADH + H(+). It carries out the reaction all-trans-retinal + NAD(+) + H2O = all-trans-retinoate + NADH + 2 H(+). Plays a pivotal role in hepatic lipid metabolism. In vitro, it catalyzes the oxidation of a variety of lipid substrates, including 17beta-estradiol, retinol, retinal, and leukotriene B4. The protein is 17-beta-hydroxysteroid dehydrogenase 13 (Hsd17b13) of Rattus norvegicus (Rat).